Consider the following 78-residue polypeptide: MPKIYRIVGETTTGMKFKIEVTAEKPYDAIEKVYSLIGSRHKLSRVQIKIREVTAVQPEEARSDSVKMLMAIDRVIKY.

It belongs to the eukaryotic ribosomal protein eL20 family. As to quaternary structure, part of the 50S ribosomal subunit. Binds 23S rRNA.

This chain is Large ribosomal subunit protein eL20, found in Pyrobaculum islandicum (strain DSM 4184 / JCM 9189 / GEO3).